Here is a 432-residue protein sequence, read N- to C-terminus: Adenylosuccinate synthetase (432 aa).

GTP-binding positions include Gly-12–Lys-18 and Gly-40–Thr-42. Asp-13 functions as the Proton acceptor in the catalytic mechanism. The Mg(2+) site is built by Asp-13 and Gly-40. IMP-binding positions include Asp-13–Lys-16, Asn-38–His-41, Thr-129, Arg-143, Gln-224, Thr-239, and Arg-303. His-41 (proton donor) is an active-site residue. Val-299–Arg-305 is a binding site for substrate. Residues Arg-305, Lys-331–Asp-333, and Gly-413–Gly-415 each bind GTP.

This sequence belongs to the adenylosuccinate synthetase family. In terms of assembly, homodimer. The cofactor is Mg(2+).

It is found in the cytoplasm. The enzyme catalyses IMP + L-aspartate + GTP = N(6)-(1,2-dicarboxyethyl)-AMP + GDP + phosphate + 2 H(+). The protein operates within purine metabolism; AMP biosynthesis via de novo pathway; AMP from IMP: step 1/2. Plays an important role in the de novo pathway of purine nucleotide biosynthesis. Catalyzes the first committed step in the biosynthesis of AMP from IMP. In Mycobacterium leprae (strain TN), this protein is Adenylosuccinate synthetase.